The following is a 357-amino-acid chain: Large ribosomal subunit protein mL45 (357 aa).

Residues Glu-333–Ile-357 are disordered. Over residues Thr-341–Ile-357 the composition is skewed to basic and acidic residues.

Belongs to the mitochondrion-specific ribosomal protein mL45 family.

It localises to the mitochondrion. This chain is Large ribosomal subunit protein mL45 (mrpl-45), found in Caenorhabditis elegans.